The sequence spans 60 residues: Large ribosomal subunit protein bL32 (60 aa).

This sequence belongs to the bacterial ribosomal protein bL32 family.

The protein is Large ribosomal subunit protein bL32 of Streptococcus sanguinis (strain SK36).